Consider the following 331-residue polypeptide: Glycerol-3-phosphate dehydrogenase [NAD(P)+] (331 aa).

The NADPH site is built by Trp-11, Arg-30, and Lys-105. Sn-glycerol 3-phosphate contacts are provided by Lys-105, Gly-134, and Ser-136. Ala-138 is an NADPH binding site. Positions 189, 242, 252, 253, and 254 each coordinate sn-glycerol 3-phosphate. Lys-189 acts as the Proton acceptor in catalysis. Arg-253 is a binding site for NADPH. NADPH contacts are provided by Val-277 and Glu-279.

It belongs to the NAD-dependent glycerol-3-phosphate dehydrogenase family.

It is found in the cytoplasm. It catalyses the reaction sn-glycerol 3-phosphate + NAD(+) = dihydroxyacetone phosphate + NADH + H(+). It carries out the reaction sn-glycerol 3-phosphate + NADP(+) = dihydroxyacetone phosphate + NADPH + H(+). It participates in membrane lipid metabolism; glycerophospholipid metabolism. Catalyzes the reduction of the glycolytic intermediate dihydroxyacetone phosphate (DHAP) to sn-glycerol 3-phosphate (G3P), the key precursor for phospholipid synthesis. This Herminiimonas arsenicoxydans protein is Glycerol-3-phosphate dehydrogenase [NAD(P)+].